The following is a 265-amino-acid chain: Phosphate import ATP-binding protein PstB 1 (265 aa).

The region spanning 20 to 260 is the ABC transporter domain; that stretch reads LSTNDLSVLY…PKGKITEDYI (241 aa). 53-60 provides a ligand contact to ATP; it reads GASGSGKS.

The protein belongs to the ABC transporter superfamily. Phosphate importer (TC 3.A.1.7) family. In terms of assembly, the complex is composed of two ATP-binding proteins (PstB), two transmembrane proteins (PstC and PstA) and a solute-binding protein (PstS).

The protein resides in the cell membrane. It catalyses the reaction phosphate(out) + ATP + H2O = ADP + 2 phosphate(in) + H(+). Part of the ABC transporter complex PstSACB involved in phosphate import. Responsible for energy coupling to the transport system. In Lactobacillus acidophilus (strain ATCC 700396 / NCK56 / N2 / NCFM), this protein is Phosphate import ATP-binding protein PstB 1.